The primary structure comprises 207 residues: Ribonuclease HII (207 aa).

Positions 18–207 (TYLSGSDEAG…PIKKISKETS (190 aa)) constitute an RNase H type-2 domain. 3 residues coordinate a divalent metal cation: Asp-24, Glu-25, and Asp-116.

Belongs to the RNase HII family. Requires Mn(2+) as cofactor. Mg(2+) is required as a cofactor.

The protein localises to the cytoplasm. The enzyme catalyses Endonucleolytic cleavage to 5'-phosphomonoester.. Functionally, endonuclease that specifically degrades the RNA of RNA-DNA hybrids. The protein is Ribonuclease HII of Mycoplasma mycoides subsp. mycoides SC (strain CCUG 32753 / NCTC 10114 / PG1).